The sequence spans 229 residues: Serine acetyltransferase (229 aa).

Belongs to the transferase hexapeptide repeat family.

The protein resides in the cytoplasm. The catalysed reaction is L-serine + acetyl-CoA = O-acetyl-L-serine + CoA. It functions in the pathway amino-acid biosynthesis; L-cysteine biosynthesis; L-cysteine from L-serine: step 1/2. Functionally, catalyzes the acetylation of serine by acetyl-CoA to produce O-acetylserine (OAS). The sequence is that of Serine acetyltransferase (cysE) from Mycobacterium tuberculosis (strain ATCC 25618 / H37Rv).